Here is a 191-residue protein sequence, read N- to C-terminus: Orotate phosphoribosyltransferase (191 aa).

114–122 (EDVITTGGS) contributes to the 5-phospho-alpha-D-ribose 1-diphosphate binding site. Residues Thr-118 and Arg-146 each coordinate orotate.

Belongs to the purine/pyrimidine phosphoribosyltransferase family. PyrE subfamily. Homodimer. Mg(2+) is required as a cofactor.

It carries out the reaction orotidine 5'-phosphate + diphosphate = orotate + 5-phospho-alpha-D-ribose 1-diphosphate. It functions in the pathway pyrimidine metabolism; UMP biosynthesis via de novo pathway; UMP from orotate: step 1/2. In terms of biological role, catalyzes the transfer of a ribosyl phosphate group from 5-phosphoribose 1-diphosphate to orotate, leading to the formation of orotidine monophosphate (OMP). The sequence is that of Orotate phosphoribosyltransferase from Caldicellulosiruptor saccharolyticus (strain ATCC 43494 / DSM 8903 / Tp8T 6331).